A 518-amino-acid polypeptide reads, in one-letter code: RNA-binding protein FUS (518 aa).

The span at 1–14 shows a compositional bias: polar residues; the sequence is MASNDYTQQATQSY. A disordered region spans residues 1–279; sequence MASNDYTQQA…SEQDNSDNNT (279 aa). Low complexity-rich tracts occupy residues 20-63, 84-105, and 116-126; these read QPGQ…GQTQ, SSQS…GQQP, and GSSQSSSYGQP. A compositionally biased stretch (gly residues) spans 127–139; the sequence is QSGGYGQQSGYGG. Low complexity predominate over residues 140–166; the sequence is QQQSYGQQQSSYNPPQGYGQQNQYNSS. 2 stretches are compositionally biased toward gly residues: residues 167–178 and 186–225; these read SGGGGGGGGGNY and SGGG…GGGY. Asymmetric dimethylarginine; alternate occurs at positions 217 and 219. An omega-N-methylarginine; alternate mark is found at Arg217 and Arg219. Asymmetric dimethylarginine is present on residues Arg235, Arg237, Arg241, Arg244, and Arg252. Residues 237-252 show a composition bias toward gly residues; that stretch reads RGGGRGGRGGMGGSDR. Ser270 carries the phosphoserine modification. The RRM domain occupies 278–364; it reads NTIFVQGLGE…NPIKVSFATR (87 aa). Thr279 bears the Phosphothreonine mark. A Glycyl lysine isopeptide (Lys-Gly) (interchain with G-Cter in SUMO2) cross-link involves residue Lys327. Phosphoserine is present on Ser333. 2 disordered regions span residues 368–417 and 437–518; these read FNRG…QRAG and CNQC…ERPY. Asymmetric dimethylarginine occurs at positions 370, 376, 379, 381, and 387. Positions 370-414 are enriched in gly residues; the sequence is RGGGNGRGGRGRGGPMGRGGYGGGGSGGGGRGGFPSGGGGGGGQQ. At Arg400 the chain carries Asymmetric dimethylarginine; alternate. Omega-N-methylarginine; alternate is present on Arg400. The RanBP2-type zinc-finger motif lies at 415 to 446; it reads RAGDWKCPNPTCENMNFSWRNECNQCKAPKPD. The span at 447-461 shows a compositional bias: gly residues; the sequence is GPGGGPGGSHMGGNY. The span at 462-485 shows a compositional bias: basic and acidic residues; sequence GDDRRGRGGYDRGGYRGRGGDRGG. Residues Arg466, Arg468, Arg473, Arg477, Arg479, Arg483, Arg487, and Arg490 each carry the asymmetric dimethylarginine modification. Residues 486–500 are compositionally biased toward gly residues; the sequence is FRGGRGGGDRGGFGP. At Arg495 the chain carries Asymmetric dimethylarginine; alternate. Arg495 bears the Omega-N-methylarginine; alternate mark. Positions 503–518 are enriched in basic and acidic residues; it reads MDSRGEHRQDRRERPY.

The protein belongs to the RRM TET family. In terms of assembly, self-oligomerizes (via N-terminal region). Oligomerization is essential for chromatin binding. Component of nuclear riboprotein complexes. Interacts with ILF3, TDRD3 and SF1. Interacts through its C-terminus with SFRS13A. Interacts with OTUB1 and SARNP. Interacts with LRSAM1. Interacts with SAFB1 in a DNA-dependent manner; this interaction tethers FUS to chromatin. Interacts with MATR3. Interacts with SNRNP70 and POLR2A; these interactions couple RNA transcription and splicing. Interacts (through its RNA-binding domain) with RALY (through its RNA-binding domain); both are components of the same RNPs. Post-translationally, phosphorylated in its N-terminal serine residues upon induced DNA damage. ATM and DNA-PK are able to phosphorylate FUS N-terminal region.

The protein resides in the nucleus. Functionally, DNA/RNA-binding protein that plays a role in various cellular processes such as transcription regulation, RNA splicing, RNA transport, DNA repair and damage response. Binds to ssRNA containing the consensus sequence 5'-AGGUAA-3'. Binds to nascent pre-mRNAs and acts as a molecular mediator between RNA polymerase II and U1 small nuclear ribonucleoprotein thereby coupling transcription and splicing. Also binds its own pre-mRNA and autoregulates its expression; this autoregulation mechanism is mediated by non-sense-mediated decay. Plays a role in DNA repair mechanisms by promoting D-loop formation and homologous recombination during DNA double-strand break repair. In neuronal cells, plays crucial roles in dendritic spine formation and stability, RNA transport, mRNA stability and synaptic homeostasis. The sequence is that of RNA-binding protein FUS (Fus) from Mus musculus (Mouse).